We begin with the raw amino-acid sequence, 869 residues long: Phenylalanine--tRNA ligase beta subunit (869 aa).

One can recognise a tRNA-binding domain in the interval 41–162 (SQVTGPIVVG…QYGFSEAEYE (122 aa)). The 77-residue stretch at 443-519 (PRAKAIHFKA…RLVGYDQIPI (77 aa)) folds into the B5 domain. D497, D503, E506, and E507 together coordinate Mg(2+). Residues 776-868 (STFPPVKQDL…EAAEIGAQLR (93 aa)) enclose the FDX-ACB domain.

It belongs to the phenylalanyl-tRNA synthetase beta subunit family. Type 1 subfamily. As to quaternary structure, tetramer of two alpha and two beta subunits. It depends on Mg(2+) as a cofactor.

Its subcellular location is the cytoplasm. It carries out the reaction tRNA(Phe) + L-phenylalanine + ATP = L-phenylalanyl-tRNA(Phe) + AMP + diphosphate + H(+). This is Phenylalanine--tRNA ligase beta subunit from Bifidobacterium longum (strain NCC 2705).